Reading from the N-terminus, the 88-residue chain is Large ribosomal subunit protein bL27 (88 aa).

Residues 1–22 (MAQKKAGGSSRNGRDSAGRRLG) form a disordered region.

Belongs to the bacterial ribosomal protein bL27 family.

This chain is Large ribosomal subunit protein bL27, found in Gluconobacter oxydans (strain 621H) (Gluconobacter suboxydans).